Consider the following 161-residue polypeptide: Cytochrome b6-f complex subunit 4 (161 aa).

3 helical membrane passes run 37-57, 96-116, and 132-152; these read LLYI…GLAV, LLGV…PFIE, and SVFL…TLPI.

The protein belongs to the cytochrome b family. PetD subfamily. The 4 large subunits of the cytochrome b6-f complex are cytochrome b6, subunit IV (17 kDa polypeptide, PetD), cytochrome f and the Rieske protein, while the 4 small subunits are PetG, PetL, PetM and PetN. The complex functions as a dimer.

Its subcellular location is the cellular thylakoid membrane. In terms of biological role, component of the cytochrome b6-f complex, which mediates electron transfer between photosystem II (PSII) and photosystem I (PSI), cyclic electron flow around PSI, and state transitions. The polypeptide is Cytochrome b6-f complex subunit 4 (Acaryochloris marina (strain MBIC 11017)).